The sequence spans 486 residues: Malonate-semialdehyde dehydrogenase 1 (486 aa).

Residues Phe154, Lys178, Glu181, Arg182, and Ser231 each coordinate NAD(+). Residue Cys286 is the Nucleophile of the active site. Glu386 lines the NAD(+) pocket.

It belongs to the aldehyde dehydrogenase family. IolA subfamily. In terms of assembly, homotetramer.

It catalyses the reaction 3-oxopropanoate + NAD(+) + CoA + H2O = hydrogencarbonate + acetyl-CoA + NADH + H(+). The catalysed reaction is 2-methyl-3-oxopropanoate + NAD(+) + CoA + H2O = propanoyl-CoA + hydrogencarbonate + NADH + H(+). It functions in the pathway polyol metabolism; myo-inositol degradation into acetyl-CoA; acetyl-CoA from myo-inositol: step 7/7. Its function is as follows. Catalyzes the oxidation of malonate semialdehyde (MSA) and methylmalonate semialdehyde (MMSA) into acetyl-CoA and propanoyl-CoA, respectively. Is involved in a myo-inositol catabolic pathway. Bicarbonate, and not CO2, is the end-product of the enzymatic reaction. The chain is Malonate-semialdehyde dehydrogenase 1 from Bacillus anthracis.